The following is a 351-amino-acid chain: Cyanuric acid amidohydrolase (351 aa).

An RU A region spans residues 1–96; sequence MPSLRAHVFR…HWTVFARETV (96 aa). Substrate is bound by residues R53 and 77–78; that span reads SG. The tract at residues 103–240 is RU B; sequence ALAIGVSRTP…HEIIVLGMSA (138 aa). Residue K153 is part of the active site. Residues R185 and 223 to 224 contribute to the substrate site; that span reads SS. The Nucleophile role is filled by S223. The tract at residues 246–351 is RU C; that stretch reads LSIDHAVMLD…PVAIIVEKEQ (106 aa). Mg(2+) is bound at residue E283. Residues R310 and 329–330 contribute to the substrate site; that span reads SG. Mg(2+) contacts are provided by A332, Q335, G336, P337, and G340.

Belongs to the cyclic amide hydrolase (CyAH) family. In terms of assembly, homotetramer.

It carries out the reaction cyanurate + H2O = 1-carboxybiuret + H(+). The protein operates within xenobiotic degradation; atrazine degradation; biuret from cyanurate: step 1/1. Its activity is regulated as follows. Inhibited by barbituric acid. In terms of biological role, responsible for the hydrolysis of cyanuric acid, an intermediate formed during catabolism of s-triazine based compounds in herbicides such as atrazine and polymers such as melamine. Catalyzes the hydrolytic opening of the s-triazine ring of cyanuric acid (2,4,6-trihydroxy-s-triazine) to yield carbon dioxide and carboxybiuret, which spontaneously decarboxylates to biuret. The chain is Cyanuric acid amidohydrolase from Rhizobium leguminosarum bv. trifolii (strain WSM1325).